The following is a 1216-amino-acid chain: FK506-binding protein 15 (1216 aa).

An N-acetylmethionine modification is found at Met1. Phosphoserine is present on residues Ser14 and Ser23. The tract at residues 41–68 (YTAPKQPKKGQGTAAGNQTAPKPAPATT) is disordered. Low complexity predominate over residues 59–68 (TAPKPAPATT). The interval 71 to 168 (SSVLFATAVH…AVSFNKQVCV (98 aa)) is important for function in growth cone organization. Lys91 carries the N6-acetyllysine modification. A PPIase FKBP-type domain is found at 196 to 289 (GDSLEVAYTG…VFEVEVRRVK (94 aa)). The disordered stretch occupies residues 292–357 (RDSGSDGHSV…QLTVNSNPDT (66 aa)). Low complexity predominate over residues 303–322 (SRDSAAPSPIPASDSLSADP). 5 positions are modified to phosphoserine: Ser306, Ser310, Ser342, Ser344, and Ser617. Residues 340–356 (SKSNSLSEQLTVNSNPD) show a composition bias toward polar residues. Coiled coils occupy residues 519–790 (MAVN…AAAE) and 820–865 (QQYR…RLEK). Residues 927–1216 (HQEEEEEEEE…DDDDDIGWLG (290 aa)) form a disordered region. The segment covering 929–940 (EEEEEEEEEEEE) has biased composition (acidic residues). Ser948 bears the Phosphoserine mark. Over residues 954–964 (PATPGMPPAPP) the composition is skewed to pro residues. Over residues 983–994 (TTPLPLQALPTP) the composition is skewed to low complexity. A Phosphoserine modification is found at Ser1018. Over residues 1036-1045 (TSIPPKPPGP) the composition is skewed to pro residues. Phosphoserine is present on residues Ser1050 and Ser1091. Residue Thr1093 is modified to Phosphothreonine. A phosphoserine mark is found at Ser1108, Ser1153, Ser1157, Ser1159, and Ser1190. Phosphothreonine is present on Thr1198. The span at 1202–1216 (GDDDDDDDDDIGWLG) shows a compositional bias: acidic residues.

The protein belongs to the FKBP-type PPIase family. In terms of assembly, interacts with WIP and actin. Interacts with TBC1D23. In terms of tissue distribution, expressed in brain, with highest levels in the granular cell layer of cerebellum and in the granule cell layer of dentate gyrus.

The protein resides in the cytoplasm. It is found in the cell projection. Its subcellular location is the axon. The protein localises to the early endosome. Functionally, involved in the transport of early endosomes at the level of transition between microfilament-based and microtubule-based movement. May be involved in the cytoskeletal organization of neuronal growth cones. Seems to be inactive as a PPIase. In Mus musculus (Mouse), this protein is FK506-binding protein 15 (Fkbp15).